The sequence spans 52 residues: ATP synthase F(1) complex subunit epsilon, mitochondrial (52 aa).

K21, K32, and K37 each carry N6-acetyllysine; alternate. K21, K32, and K37 each carry N6-succinyllysine; alternate. Position 44 is an N6-acetyllysine (K44).

This sequence belongs to the eukaryotic ATPase epsilon family. In terms of assembly, component of the ATP synthase complex composed at least of ATP5F1A/subunit alpha, ATP5F1B/subunit beta, ATP5MC1/subunit c (homooctomer), MT-ATP6/subunit a, MT-ATP8/subunit 8, ATP5ME/subunit e, ATP5MF/subunit f, ATP5MG/subunit g, ATP5MK/subunit k, ATP5MJ/subunit j, ATP5F1C/subunit gamma, ATP5F1D/subunit delta, ATP5F1E/subunit epsilon, ATP5PF/subunit F6, ATP5PB/subunit b, ATP5PD/subunit d, ATP5PO/subunit OSCP. ATP synthase complex consists of a soluble F(1) head domain (subunits alpha(3) and beta(3)) - the catalytic core - and a membrane F(0) domain - the membrane proton channel (subunits c, a, 8, e, f, g, k and j). These two domains are linked by a central stalk (subunits gamma, delta, and epsilon) rotating inside the F1 region and a stationary peripheral stalk (subunits F6, b, d, and OSCP).

It is found in the mitochondrion. It localises to the mitochondrion inner membrane. In terms of biological role, subunit epsilon, of the mitochondrial membrane ATP synthase complex (F(1)F(0) ATP synthase or Complex V) that produces ATP from ADP in the presence of a proton gradient across the membrane which is generated by electron transport complexes of the respiratory chain. ATP synthase complex consist of a soluble F(1) head domain - the catalytic core - and a membrane F(1) domain - the membrane proton channel. These two domains are linked by a central stalk rotating inside the F(1) region and a stationary peripheral stalk. During catalysis, ATP synthesis in the catalytic domain of F(1) is coupled via a rotary mechanism of the central stalk subunits to proton translocation. In vivo, can only synthesize ATP although its ATP hydrolase activity can be activated artificially in vitro. May be essential for the assembly of F(1) and may play an important role in the incorporation of the hydrophobic subunit c into the F(1)-c oligomer rotor of the mitochondrial ATP synthase complex. The protein is ATP synthase F(1) complex subunit epsilon, mitochondrial of Mus musculus (Mouse).